We begin with the raw amino-acid sequence, 326 residues long: Glutaminase 2 (326 aa).

Residues Ser-73, Asn-125, Glu-169, Asn-176, Tyr-200, Tyr-252, and Val-270 each contribute to the substrate site.

This sequence belongs to the glutaminase family. In terms of assembly, homotetramer.

It carries out the reaction L-glutamine + H2O = L-glutamate + NH4(+). In Bacillus cereus (strain ATCC 14579 / DSM 31 / CCUG 7414 / JCM 2152 / NBRC 15305 / NCIMB 9373 / NCTC 2599 / NRRL B-3711), this protein is Glutaminase 2.